The sequence spans 130 residues: Small ribosomal subunit protein uS9 (130 aa).

Belongs to the universal ribosomal protein uS9 family.

In Salmonella paratyphi A (strain AKU_12601), this protein is Small ribosomal subunit protein uS9.